The chain runs to 942 residues: Nuclear receptor coactivator 7 (942 aa).

N-acetylmethionine is present on M1. The segment covering 1–12 has biased composition (basic and acidic residues); the sequence is MDTKEEKKERKQ. Positions 1 to 46 are disordered; sequence MDTKEEKKERKQSYFARLKKKKQAKQNAETASAVATRTHTGKEDNN. A coiled-coil region spans residues 4–29; sequence KEEKKERKQSYFARLKKKKQAKQNAE. The segment covering 25–38 has biased composition (polar residues); it reads KQNAETASAVATRT. Phosphoserine is present on S89. The region spanning 114–157 is the LysM domain; the sequence is MEYTAGNQDTLNSIALKFNITPNKLVELNKLFTHTIVPGQVLFV. The residue at position 134 (T134) is a Phosphothreonine. The tract at residues 161 to 188 is disordered; that stretch reads NSPSSTLRLSSSSPGATVSPSSSDAEYD. Over residues 162 to 183 the composition is skewed to low complexity; the sequence is SPSSTLRLSSSSPGATVSPSSS. Residues S179, S183, S208, S209, and S211 each carry the phosphoserine modification. The interval 324–416 is disordered; it reads KFKSINKEKR…ENFLGEDDDF (93 aa). A compositionally biased stretch (polar residues) spans 356-368; it reads GHTPTKPSGSSVS. Residues 369 to 381 show a composition bias toward basic and acidic residues; it reads EKLKKLDSSRETS. S441, S500, and S502 each carry phosphoserine. Positions 781 to 942 constitute a TLDc domain; the sequence is ALLENMHIEQ…VQDLEVWAFD (162 aa).

Belongs to the OXR1 family. Interacts with ESR1, ESR2A, ESR2B, THRB, PPARG and RARA in a ligand-inducible manner. Interacts with the heterodimer AHR-ARNT. Highly expressed in brain. Weakly expressed in mammary gland, ovary, uterus, prostate, stomach, bladder, spinal cord and pancreas. Expressed in cancer cell line.

It localises to the nucleus. In terms of biological role, enhances the transcriptional activities of several nuclear receptors. Involved in the coactivation of different nuclear receptors, such as ESR1, THRB, PPARG and RARA. In Homo sapiens (Human), this protein is Nuclear receptor coactivator 7 (NCOA7).